The chain runs to 521 residues: Biotinidase (521 aa).

An N-terminal signal peptide occupies residues 1 to 25 (MSGARTAHALVFLLGCSALALGVCS). In terms of domain architecture, CN hydrolase spans 50-329 (NPLELSSRQQ…QGLVGTENTT (280 aa)). Glu-90 serves as the catalytic Proton acceptor. 2 N-linked (GlcNAc...) asparagine glycosylation sites follow: Asn-128 and Asn-181. Lys-190 functions as the Proton donor in the catalytic mechanism. The Nucleophile role is filled by Cys-223. N-linked (GlcNAc...) asparagine glycosylation is present at Asn-380.

It belongs to the carbon-nitrogen hydrolase superfamily. BTD/VNN family.

It is found in the secreted. The protein localises to the extracellular space. The catalysed reaction is biocytin + H2O = biotin + L-lysine. The enzyme catalyses biotin amide + H2O = biotin + NH4(+). In terms of biological role, catalytic release of biotin from biocytin, the product of biotin-dependent carboxylases degradation. The protein is Biotinidase of Rattus norvegicus (Rat).